The primary structure comprises 926 residues: Transcriptional activator protein acu-15 (926 aa).

Residues 24–51 (CDRCRSKKIRCDGIRPCCSQCANVGFEC) constitute a DNA-binding region (zn(2)-C6 fungal-type). 3 disordered regions span residues 100-129 (KMHS…TPAK), 602-649 (LPQS…SASL), and 667-801 (TPQH…TSTG). Residues 119–129 (EIKRDSGTPAK) show a composition bias toward basic and acidic residues. Composition is skewed to low complexity over residues 623-632 (AQQGSPSPSA) and 669-681 (QHQQ…LQQQ). 2 stretches are compositionally biased toward polar residues: residues 689–703 (ARSQ…QKAQ) and 726–736 (RTSTGTQSTPN). A compositionally biased stretch (low complexity) spans 740 to 792 (LSLSSPQSPVSPVQMRSQPHQLQQQQQQQPQPQQQQQQHQRSSIASSHSQQGQ).

Its subcellular location is the nucleus. In terms of biological role, positive regulator of acetate induction. The sequence is that of Transcriptional activator protein acu-15 (acu-15) from Neurospora crassa (strain ATCC 24698 / 74-OR23-1A / CBS 708.71 / DSM 1257 / FGSC 987).